A 337-amino-acid chain; its full sequence is Glyceraldehyde-3-phosphate dehydrogenase 1 (337 aa).

Residues 12–13, D34, and M79 contribute to the NAD(+) site; that span reads RI. Residues 151–153, T182, 211–212, and R234 contribute to the D-glyceraldehyde 3-phosphate site; these read SCT and TG. Catalysis depends on C152, which acts as the Nucleophile. N316 serves as a coordination point for NAD(+).

This sequence belongs to the glyceraldehyde-3-phosphate dehydrogenase family. As to quaternary structure, homotetramer.

Its subcellular location is the cytoplasm. It carries out the reaction D-glyceraldehyde 3-phosphate + phosphate + NAD(+) = (2R)-3-phospho-glyceroyl phosphate + NADH + H(+). It participates in carbohydrate degradation; glycolysis; pyruvate from D-glyceraldehyde 3-phosphate: step 1/5. This chain is Glyceraldehyde-3-phosphate dehydrogenase 1 (GAP1), found in Giardia intestinalis (Giardia lamblia).